The sequence spans 687 residues: DNA-directed RNA polymerase subunit beta' (687 aa).

Zn(2+) contacts are provided by Cys69, Cys71, Cys87, and Cys90. The Mg(2+) site is built by Asp495, Asp497, and Asp499.

This sequence belongs to the RNA polymerase beta' chain family. RpoC1 subfamily. In plastids the minimal PEP RNA polymerase catalytic core is composed of four subunits: alpha, beta, beta', and beta''. When a (nuclear-encoded) sigma factor is associated with the core the holoenzyme is formed, which can initiate transcription. Mg(2+) is required as a cofactor. It depends on Zn(2+) as a cofactor.

It localises to the plastid. Its subcellular location is the chloroplast. The enzyme catalyses RNA(n) + a ribonucleoside 5'-triphosphate = RNA(n+1) + diphosphate. Its function is as follows. DNA-dependent RNA polymerase catalyzes the transcription of DNA into RNA using the four ribonucleoside triphosphates as substrates. In Solanum tuberosum (Potato), this protein is DNA-directed RNA polymerase subunit beta'.